A 108-amino-acid polypeptide reads, in one-letter code: Translation initiation factor 1A (108 aa).

An S1-like domain is found at 11–85 (PSKDVPKPEE…TKADIVYRYM (75 aa)).

The protein belongs to the eIF-1A family.

Its function is as follows. Seems to be required for maximal rate of protein biosynthesis. Enhances ribosome dissociation into subunits and stabilizes the binding of the initiator Met-tRNA(I) to 40 S ribosomal subunits. The sequence is that of Translation initiation factor 1A (eIF1A) from Metallosphaera sedula (strain ATCC 51363 / DSM 5348 / JCM 9185 / NBRC 15509 / TH2).